We begin with the raw amino-acid sequence, 71 residues long: Brevinin-1SN2 (71 aa).

Residues 1 to 22 (MFTMKKSLLLIFFLGTINLSLC) form the signal peptide. A propeptide spans 23–45 (EEERNADEDEKRDGDDESDVEVQ) (removed in mature form). Cysteines 65 and 71 form a disulfide.

The protein belongs to the frog skin active peptide (FSAP) family. Brevinin subfamily. Expressed by the skin glands.

The protein localises to the secreted. Functionally, antimicrobial peptide. Active against a variety of Gram-negative and Gram-positive bacterial strains. Active against fungus C.glabrata 090902 and C.albicans ATCC 10231. Shows hemolytic activity against human erythrocytes. The polypeptide is Brevinin-1SN2 (Sylvirana spinulosa (Fine-spined frog)).